Reading from the N-terminus, the 479-residue chain is Ammonium transporter 3 member 2 (479 aa).

11 helical membrane passes run 34–54, 59–79, 139–159, 164–184, 202–222, 237–257, 272–292, 297–317, 321–341, 355–375, and 407–427; these read VAAT…YGGV, WAVN…ICWV, VVYF…GSLL, FLAW…VGAF, GGYV…YWVG, ILFT…FNGG, NTNI…VIFF, VVGA…AAGV, WAAL…MMIL, LGVF…TGLF, and IAGG…ICLA.

Belongs to the ammonia transporter channel (TC 1.A.11.2) family.

It localises to the membrane. Its function is as follows. Involved in ammonium transport. The protein is Ammonium transporter 3 member 2 (AMT3-2) of Oryza sativa subsp. japonica (Rice).